Reading from the N-terminus, the 846-residue chain is Arsenate respiratory reductase molybdopterin-containing subunit ArrA (846 aa).

A signal peptide (tat-type signal) is located at residues 1–29 (MRIKRREFLKASAAVGAVAVASPTLNAFA). The 4Fe-4S Mo/W bis-MGD-type domain maps to 43–99 (GKWIPSTCQGCTTWCPVEFLFRMAVRSKYAATQLSKANNGYCCVRGHLMLQQLYDPD). 4 residues coordinate [4Fe-4S] cluster: Cys50, Cys53, Cys57, and Cys85. Arg155 contacts arsenite. Tyr156 is an arsenate binding site. His179 is an arsenite binding site. Ser180 is an arsenate binding site. Cys183 contacts Mo-bis(molybdopterin guanine dinucleotide). Lys188 contributes to the arsenate binding site. Tyr200 serves as a coordination point for arsenite.

The protein belongs to the prokaryotic molybdopterin-containing oxidoreductase family. Heterodimer composed of one large subunit (ArrA) and one small subunit (ArrB). Requires [4Fe-4S] cluster as cofactor. Mo-bis(molybdopterin guanine dinucleotide) is required as a cofactor. In terms of processing, predicted to be exported by the Tat system. The position of the signal peptide cleavage has been experimentally proven.

The protein resides in the periplasm. It catalyses the reaction arsenite + A + H2O = arsenate + AH2 + H(+). In terms of biological role, component of the arsenate respiratory reductase (Arr) complex, which catalyzes the reduction of arsenate (As(V)) to arsenite (As(III)). Can use acetate as the electron donor. ArrA is the arsenate-binding subunit. This Chrysiogenes arsenatis protein is Arsenate respiratory reductase molybdopterin-containing subunit ArrA.